Consider the following 282-residue polypeptide: Protein canopy homolog 3 (282 aa).

Residues 1–33 form the signal peptide; the sequence is MEPLPEPASGPRPRPHRLLLLSLLLLLLPLLPA. A Saposin B-type domain is found at 53–275; it reads SKCEVCKYVA…EGIQKASPLT (223 aa). Cystine bridges form between C55–C212, C58–C200, and C110–C172. N-linked (GlcNAc...) asparagine glycosylation is present at N159. Positions 159–185 form a coiled coil; that stretch reads NETSAEVADLKKQCDVLVEEFEEVIED. Positions 221-282 are disordered; the sequence is KGDTAALGGK…PLTHSPPDEL (62 aa). The segment covering 255 to 266 has biased composition (acidic residues); the sequence is DLDGDPSPEEDE.

It belongs to the canopy family. Interacts with HSP90B1; this interaction is disrupted in the presence of ATP. Interacts with TLR1, TLR2, TLR4 and TLR9.

It localises to the endoplasmic reticulum. In terms of biological role, toll-like receptor (TLR)-specific co-chaperone for HSP90B1. Required for proper TLR folding, except that of TLR3, and hence controls TLR exit from the endoplasmic reticulum. Consequently, required for both innate and adaptive immune responses. The polypeptide is Protein canopy homolog 3 (CNPY3) (Bos taurus (Bovine)).